Here is a 211-residue protein sequence, read N- to C-terminus: Thymidylate kinase (211 aa).

An ATP-binding site is contributed by 10–17 (GVEGCGKT).

This sequence belongs to the thymidylate kinase family.

The enzyme catalyses dTMP + ATP = dTDP + ADP. Functionally, phosphorylation of dTMP to form dTDP in both de novo and salvage pathways of dTTP synthesis. This is Thymidylate kinase from Nostoc punctiforme (strain ATCC 29133 / PCC 73102).